A 234-amino-acid chain; its full sequence is Prolactin-6A1 (234 aa).

The first 33 residues, M1–S33, serve as a signal peptide directing secretion. Residue N61 is glycosylated (N-linked (GlcNAc...) asparagine). 2 disulfides stabilise this stretch: C93–C209 and C226–C234.

This sequence belongs to the somatotropin/prolactin family.

It is found in the secreted. This is Prolactin-6A1 (Prl6a1) from Rattus norvegicus (Rat).